A 543-amino-acid polypeptide reads, in one-letter code: ATP-dependent ubiquitin transferase-like protein Cap2 (543 aa).

The E2-like domain stretch occupies residues Met1–Gly159. Residue Cys84 is the For E2-like domain of the active site. The linker domain stretch occupies residues Cys160–Ser305. The segment at Lys306–Ser543 is adenylation plus E1-like domain. Catalysis depends on for E1-like domain residues Cys450 and Cys453.

In the C-terminal section; belongs to the HesA/MoeB/ThiF family. In terms of assembly, forms a Cap2-CdnA complex. A Cap2 dimer is bound on either side by a CdnA monomer.

CD-NTase priming component of a CBASS antiviral system. CBASS (cyclic oligonucleotide-based antiphage signaling system) provides immunity against bacteriophages. The CD-NTase protein (CdnA) synthesizes cyclic nucleotides in response to infection; these serve as specific second messenger signals. The signals activate a diverse range of effectors, leading to bacterial cell death and thus abortive phage infection. A type II-A(GA) CBASS system. In terms of biological role, acts as a protein transferase, conjugating CdnA, the CD-NTase, to unidentified target(s) in the cell probably via an E1-E2 ubiquitin transferase-like mechanism. This primes CdnA, upon phage infection CdnA activates and makes cyclic nucleotides. Protein conjugation requires ATP. Its function is as follows. The capV-cdnA-cap2-cap3 operon provides about 10(4)-fold protection in strain BWHPSA011 against infection by phage PaMx41. In P.aeruginosa strain PAO1 it confers protection against phages PaMx41 and JBD18 but not JBD67 (JBD18 and JBD67 do not replicate in BWHPSA011 / Pa011). When acb2 in JBD67 is deleted this CBASS operon then protects against JDB67 also. This CBASS system limits prophage induction of lysogenized JBD67 as well as viral lytic replication. This chain is ATP-dependent ubiquitin transferase-like protein Cap2, found in Pseudomonas aeruginosa (strain BWHPSA011 / Pa011).